Here is a 355-residue protein sequence, read N- to C-terminus: tRNA (guanine-N(1)-)-methyltransferase (355 aa).

Residues Gly109 and 129–134 (IGDYVL) each bind S-adenosyl-L-methionine.

This sequence belongs to the RNA methyltransferase TrmD family. In terms of assembly, homodimer.

Its subcellular location is the cytoplasm. The enzyme catalyses guanosine(37) in tRNA + S-adenosyl-L-methionine = N(1)-methylguanosine(37) in tRNA + S-adenosyl-L-homocysteine + H(+). Its function is as follows. Specifically methylates guanosine-37 in various tRNAs. This is tRNA (guanine-N(1)-)-methyltransferase from Chlamydia abortus (strain DSM 27085 / S26/3) (Chlamydophila abortus).